Consider the following 120-residue polypeptide: Chaperonin GroEL (120 aa).

23–27 contributes to the ATP binding site; the sequence is DGTTT.

Belongs to the chaperonin (HSP60) family. Forms a cylinder of 14 subunits composed of two heptameric rings stacked back-to-back. Interacts with the co-chaperonin GroES.

It is found in the cytoplasm. It catalyses the reaction ATP + H2O + a folded polypeptide = ADP + phosphate + an unfolded polypeptide.. Functionally, together with its co-chaperonin GroES, plays an essential role in assisting protein folding. The GroEL-GroES system forms a nano-cage that allows encapsulation of the non-native substrate proteins and provides a physical environment optimized to promote and accelerate protein folding. The sequence is that of Chaperonin GroEL from Mycolicibacterium pulveris (Mycobacterium pulveris).